The sequence spans 677 residues: Pannexin-2 (677 aa).

Over 11 to 47 (MATALLAGEKLRELILPGAQDDKAGALAALLLQLKLE) the chain is Cytoplasmic. The helical transmembrane segment at 48-70 (LPFDRVVTIGTVLVPILLVTLVF) threads the bilayer. Residues 71-123 (TKNFAEEPIYCYTPHNFTRDQALYARGYCWTELRDALPGVDASLWPSLFEHKF) are Extracellular-facing. Residue N86 is glycosylated (N-linked (GlcNAc...) asparagine). The helical transmembrane segment at 124–146 (LPYALLAFAAIMYVPALGWEFLA) threads the bilayer. Residues 147-226 (STRLTSELNF…RGRSNFLAKL (80 aa)) are Cytoplasmic-facing. A helical membrane pass occupies residues 227 to 249 (YLARHVLILLLSAVPISYLCTYY). Over 250–292 (ATQKQNEFTCALGASPDGAAGAGPAVRVSCKLPSVQLQRIIAG) the chain is Extracellular. A helical transmembrane segment spans residues 293 to 315 (VDIVLLCVMNLIILVNLIHLFIF). The Cytoplasmic segment spans residues 316-643 (RKSNFIFDKL…AREEEDGGPR (328 aa)). Disordered stretches follow at residues 393-423 (ATPT…PPVV) and 454-510 (NSKA…KKHA). Pro residues predominate over residues 492–504 (GPGPAPAPAPPPA). S593 is subject to Phosphoserine.

The protein belongs to the pannexin family. In terms of assembly, homoheptameric. In terms of processing, S-palmitoylated in neural stem and progenitor cells. Cleaved by CASP3 and CASP7 during apoptosis. Cleavage has no effect on it function.

Its subcellular location is the cell membrane. The protein localises to the golgi apparatus membrane. The protein resides in the endoplasmic reticulum membrane. It carries out the reaction ATP(in) = ATP(out). The catalysed reaction is chloride(in) = chloride(out). It catalyses the reaction iodide(out) = iodide(in). The enzyme catalyses Na(+)(in) = Na(+)(out). It carries out the reaction D-gluconate(in) = D-gluconate(out). Functionally, ion channel with a slight anion preference. Also able to release ATP. Plays a role in regulating neurogenesis and apoptosis in keratinocytes. This is Pannexin-2 from Homo sapiens (Human).